A 180-amino-acid polypeptide reads, in one-letter code: Hypoxanthine-guanine phosphoribosyltransferase (180 aa).

GMP is bound by residues lysine 40, 99–107 (EDIVDSGLT), lysine 131, and aspartate 159. The Proton acceptor role is filled by aspartate 103. Mg(2+) is bound at residue aspartate 159.

This sequence belongs to the purine/pyrimidine phosphoribosyltransferase family. Requires Mg(2+) as cofactor.

The protein resides in the cytoplasm. It catalyses the reaction IMP + diphosphate = hypoxanthine + 5-phospho-alpha-D-ribose 1-diphosphate. The enzyme catalyses GMP + diphosphate = guanine + 5-phospho-alpha-D-ribose 1-diphosphate. The protein operates within purine metabolism; IMP biosynthesis via salvage pathway; IMP from hypoxanthine: step 1/1. Its function is as follows. Converts guanine to guanosine monophosphate, and hypoxanthine to inosine monophosphate. Transfers the 5-phosphoribosyl group from 5-phosphoribosylpyrophosphate onto the purine. Plays a central role in the generation of purine nucleotides through the purine salvage pathway. The sequence is that of Hypoxanthine-guanine phosphoribosyltransferase (hprT) from Dictyostelium discoideum (Social amoeba).